The primary structure comprises 442 residues: Putative neutral sphingomyelinase (442 aa).

Glu46 serves as a coordination point for Mg(2+). His264 serves as the catalytic Proton acceptor. Residues 309–330 (ALTGEDDQSSQHQPEIQCNGSS) are disordered. Polar residues predominate over residues 318–330 (SQHQPEIQCNGSS). A run of 2 helical transmembrane segments spans residues 362-384 (RILY…EFTA) and 391-413 (IFLL…ASIW).

Belongs to the neutral sphingomyelinase family.

It is found in the membrane. The enzyme catalyses a sphingomyelin + H2O = phosphocholine + an N-acylsphing-4-enine + H(+). The protein operates within lipid metabolism; sphingolipid metabolism. This chain is Putative neutral sphingomyelinase, found in Drosophila melanogaster (Fruit fly).